A 424-amino-acid polypeptide reads, in one-letter code: GTPase Obg (424 aa).

One can recognise an Obg domain in the interval 1 to 158 (MFYDQAKIYV…RNLLLELKLL (158 aa)). The region spanning 159-329 (ADVGLVGFPN…LVYAAAKALP (171 aa)) is the OBG-type G domain. GTP-binding positions include 165–172 (GFPNVGKS), 190–194 (FTTLV), 212–215 (DIPG), 282–285 (NKMD), and 310–312 (SAA). Residues Ser-172 and Thr-192 each contribute to the Mg(2+) site. An OCT domain is found at 347-424 (TQASAPHRFE…IAGIEFEWEE (78 aa)).

The protein belongs to the TRAFAC class OBG-HflX-like GTPase superfamily. OBG GTPase family. As to quaternary structure, monomer. Mg(2+) serves as cofactor.

Its subcellular location is the cytoplasm. Its function is as follows. An essential GTPase which binds GTP, GDP and possibly (p)ppGpp with moderate affinity, with high nucleotide exchange rates and a fairly low GTP hydrolysis rate. Plays a role in control of the cell cycle, stress response, ribosome biogenesis and in those bacteria that undergo differentiation, in morphogenesis control. The polypeptide is GTPase Obg (Desulfitobacterium hafniense (strain DSM 10664 / DCB-2)).